A 341-amino-acid chain; its full sequence is Methionine import ATP-binding protein MetN (341 aa).

The region spanning 9 to 247 (ISVQKVNKEI…PRSSITEELF (239 aa)) is the ABC transporter domain. 41–48 (GHSGSGKS) contributes to the ATP binding site.

It belongs to the ABC transporter superfamily. Methionine importer (TC 3.A.1.24) family. As to quaternary structure, the complex is composed of two ATP-binding proteins (MetN), two transmembrane proteins (MetI) and a solute-binding protein (MetQ).

Its subcellular location is the cell inner membrane. It catalyses the reaction L-methionine(out) + ATP + H2O = L-methionine(in) + ADP + phosphate + H(+). The catalysed reaction is D-methionine(out) + ATP + H2O = D-methionine(in) + ADP + phosphate + H(+). Part of the ABC transporter complex MetNIQ involved in methionine import. Responsible for energy coupling to the transport system. In Chlamydia caviae (strain ATCC VR-813 / DSM 19441 / 03DC25 / GPIC) (Chlamydophila caviae), this protein is Methionine import ATP-binding protein MetN.